The chain runs to 176 residues: Large ribosomal subunit protein bL17m (176 aa).

The N-terminal 8 residues, 1–8 (MRLSLAAA), are a transit peptide targeting the mitochondrion.

It belongs to the bacterial ribosomal protein bL17 family. Component of the mitochondrial ribosome large subunit (39S) which comprises a 16S rRNA and about 50 distinct proteins.

It localises to the mitochondrion. This chain is Large ribosomal subunit protein bL17m (Mrpl17), found in Rattus norvegicus (Rat).